The primary structure comprises 441 residues: D-inositol 3-phosphate glycosyltransferase (441 aa).

H38 contributes to the 1D-myo-inositol 3-phosphate binding site. UDP-N-acetyl-alpha-D-glucosamine is bound by residues 44 to 45 and G52; that span reads QP. 1D-myo-inositol 3-phosphate-binding positions include 49–54, K107, Y140, T164, and R184; that span reads DAGGMN. UDP-N-acetyl-alpha-D-glucosamine is bound by residues R258, K263, and Q316. Residues F325, Q326, and A328 each contribute to the Mg(2+) site. The UDP-N-acetyl-alpha-D-glucosamine site is built by E338 and E346. Residue T352 participates in Mg(2+) binding.

It belongs to the glycosyltransferase group 1 family. MshA subfamily. Homodimer.

The catalysed reaction is 1D-myo-inositol 3-phosphate + UDP-N-acetyl-alpha-D-glucosamine = 1D-myo-inositol 2-acetamido-2-deoxy-alpha-D-glucopyranoside 3-phosphate + UDP + H(+). In terms of biological role, catalyzes the transfer of a N-acetyl-glucosamine moiety to 1D-myo-inositol 3-phosphate to produce 1D-myo-inositol 2-acetamido-2-deoxy-glucopyranoside 3-phosphate in the mycothiol biosynthesis pathway. The chain is D-inositol 3-phosphate glycosyltransferase from Mycolicibacterium paratuberculosis (strain ATCC BAA-968 / K-10) (Mycobacterium paratuberculosis).